A 113-amino-acid chain; its full sequence is Urease subunit beta (113 aa).

The protein belongs to the urease beta subunit family. As to quaternary structure, heterotrimer of UreA (gamma), UreB (beta) and UreC (alpha) subunits. Three heterotrimers associate to form the active enzyme.

It localises to the cytoplasm. It catalyses the reaction urea + 2 H2O + H(+) = hydrogencarbonate + 2 NH4(+). It functions in the pathway nitrogen metabolism; urea degradation; CO(2) and NH(3) from urea (urease route): step 1/1. This chain is Urease subunit beta, found in Nitrosospira multiformis (strain ATCC 25196 / NCIMB 11849 / C 71).